Reading from the N-terminus, the 369-residue chain is Dual-specificity RNA methyltransferase RlmN (369 aa).

Glu-94 acts as the Proton acceptor in catalysis. Positions 113 to 346 constitute a Radical SAM core domain; that stretch reads ESEKWTMCLS…CTIRESRGID (234 aa). Cys-120 and Cys-351 are disulfide-bonded. Residues Cys-127, Cys-131, and Cys-134 each coordinate [4Fe-4S] cluster. Residues 177–178, Ser-209, 232–234, and Asn-308 each bind S-adenosyl-L-methionine; these read GE and SLH. Residue Cys-351 is the S-methylcysteine intermediate of the active site.

This sequence belongs to the radical SAM superfamily. RlmN family. It depends on [4Fe-4S] cluster as a cofactor.

It localises to the cytoplasm. It carries out the reaction adenosine(2503) in 23S rRNA + 2 reduced [2Fe-2S]-[ferredoxin] + 2 S-adenosyl-L-methionine = 2-methyladenosine(2503) in 23S rRNA + 5'-deoxyadenosine + L-methionine + 2 oxidized [2Fe-2S]-[ferredoxin] + S-adenosyl-L-homocysteine. The catalysed reaction is adenosine(37) in tRNA + 2 reduced [2Fe-2S]-[ferredoxin] + 2 S-adenosyl-L-methionine = 2-methyladenosine(37) in tRNA + 5'-deoxyadenosine + L-methionine + 2 oxidized [2Fe-2S]-[ferredoxin] + S-adenosyl-L-homocysteine. Functionally, specifically methylates position 2 of adenine 2503 in 23S rRNA and position 2 of adenine 37 in tRNAs. m2A2503 modification seems to play a crucial role in the proofreading step occurring at the peptidyl transferase center and thus would serve to optimize ribosomal fidelity. The sequence is that of Dual-specificity RNA methyltransferase RlmN from Helicobacter hepaticus (strain ATCC 51449 / 3B1).